Consider the following 144-residue polypeptide: D-aminoacyl-tRNA deacylase (144 aa).

Positions 136–137 match the Gly-cisPro motif, important for rejection of L-amino acids motif; it reads GP.

This sequence belongs to the DTD family. As to quaternary structure, homodimer.

The protein resides in the cytoplasm. It catalyses the reaction glycyl-tRNA(Ala) + H2O = tRNA(Ala) + glycine + H(+). The enzyme catalyses a D-aminoacyl-tRNA + H2O = a tRNA + a D-alpha-amino acid + H(+). In terms of biological role, an aminoacyl-tRNA editing enzyme that deacylates mischarged D-aminoacyl-tRNAs. Also deacylates mischarged glycyl-tRNA(Ala), protecting cells against glycine mischarging by AlaRS. Acts via tRNA-based rather than protein-based catalysis; rejects L-amino acids rather than detecting D-amino acids in the active site. By recycling D-aminoacyl-tRNA to D-amino acids and free tRNA molecules, this enzyme counteracts the toxicity associated with the formation of D-aminoacyl-tRNA entities in vivo and helps enforce protein L-homochirality. This Aliivibrio salmonicida (strain LFI1238) (Vibrio salmonicida (strain LFI1238)) protein is D-aminoacyl-tRNA deacylase.